We begin with the raw amino-acid sequence, 177 residues long: Acireductone dioxygenase (177 aa).

Residues H99, H101, E105, and H143 each coordinate Fe(2+). The Ni(2+) site is built by H99, H101, E105, and H143.

Belongs to the acireductone dioxygenase (ARD) family. Monomer. Fe(2+) is required as a cofactor. It depends on Ni(2+) as a cofactor.

It carries out the reaction 1,2-dihydroxy-5-(methylsulfanyl)pent-1-en-3-one + O2 = 3-(methylsulfanyl)propanoate + CO + formate + 2 H(+). It catalyses the reaction 1,2-dihydroxy-5-(methylsulfanyl)pent-1-en-3-one + O2 = 4-methylsulfanyl-2-oxobutanoate + formate + 2 H(+). Its pathway is amino-acid biosynthesis; L-methionine biosynthesis via salvage pathway; L-methionine from S-methyl-5-thio-alpha-D-ribose 1-phosphate: step 5/6. Catalyzes 2 different reactions between oxygen and the acireductone 1,2-dihydroxy-3-keto-5-methylthiopentene (DHK-MTPene) depending upon the metal bound in the active site. Fe-containing acireductone dioxygenase (Fe-ARD) produces formate and 2-keto-4-methylthiobutyrate (KMTB), the alpha-ketoacid precursor of methionine in the methionine recycle pathway. Ni-containing acireductone dioxygenase (Ni-ARD) produces methylthiopropionate, carbon monoxide and formate, and does not lie on the methionine recycle pathway. This is Acireductone dioxygenase from Leptospira borgpetersenii serovar Hardjo-bovis (strain L550).